The chain runs to 723 residues: Malate synthase G (723 aa).

Acetyl-CoA-binding positions include V118, 125–126 (RY), S274, and R311. R338 acts as the Proton acceptor in catalysis. Glyoxylate-binding positions include R338, E427, and 452–455 (GFLD). Mg(2+) contacts are provided by E427 and D455. Residue P536 coordinates acetyl-CoA. Residue C617 is modified to Cysteine sulfenic acid (-SOH). Residue D631 is the Proton donor of the active site. Residue C688 is modified to Cysteine sulfenic acid (-SOH).

Belongs to the malate synthase family. GlcB subfamily. Monomer. It depends on Mg(2+) as a cofactor.

It is found in the cytoplasm. The enzyme catalyses glyoxylate + acetyl-CoA + H2O = (S)-malate + CoA + H(+). It functions in the pathway carbohydrate metabolism; glyoxylate cycle; (S)-malate from isocitrate: step 2/2. In terms of biological role, involved in the glycolate utilization. Catalyzes the condensation and subsequent hydrolysis of acetyl-coenzyme A (acetyl-CoA) and glyoxylate to form malate and CoA. This chain is Malate synthase G, found in Shigella flexneri.